The chain runs to 216 residues: Methylthioribulose-1-phosphate dehydratase (216 aa).

Positions 101 and 103 each coordinate Zn(2+).

This sequence belongs to the aldolase class II family. MtnB subfamily. It depends on Zn(2+) as a cofactor.

It carries out the reaction 5-(methylsulfanyl)-D-ribulose 1-phosphate = 5-methylsulfanyl-2,3-dioxopentyl phosphate + H2O. It functions in the pathway amino-acid biosynthesis; L-methionine biosynthesis via salvage pathway; L-methionine from S-methyl-5-thio-alpha-D-ribose 1-phosphate: step 2/6. Functionally, catalyzes the dehydration of methylthioribulose-1-phosphate (MTRu-1-P) into 2,3-diketo-5-methylthiopentyl-1-phosphate (DK-MTP-1-P). This Bradyrhizobium sp. (strain BTAi1 / ATCC BAA-1182) protein is Methylthioribulose-1-phosphate dehydratase.